A 684-amino-acid polypeptide reads, in one-letter code: Sec1 family domain-containing protein 2 (684 aa).

Belongs to the STXBP/unc-18/SEC1 family.

May be involved in protein transport. The sequence is that of Sec1 family domain-containing protein 2 (SCFD2) from Homo sapiens (Human).